The sequence spans 260 residues: Putative cysteine-rich repeat secretory protein 23 (260 aa).

The signal sequence occupies residues 1–31; sequence MSSSFVYKSLFLVPILAVVAMQLSFVQSVLS. 2 Gnk2-homologous domains span residues 38-136 and 142-254; these read YLHH…NISY and LPEQ…LYLF.

This sequence belongs to the cysteine-rich repeat secretory protein family.

It localises to the secreted. The polypeptide is Putative cysteine-rich repeat secretory protein 23 (CRRSP23) (Arabidopsis thaliana (Mouse-ear cress)).